The following is a 121-amino-acid chain: MARIAGINIPPQKHAEIGLTAIYGIGRTTAQKICDSCGIARDKKIKDLTDGDLEKIREEVGRMTIEGDLRRETTINIKRLMDLGCYRGFRHRRGLPMRGQRTRTNARTRKGPRKSAAALKK.

A disordered region spans residues 93–121 (RGLPMRGQRTRTNARTRKGPRKSAAALKK).

This sequence belongs to the universal ribosomal protein uS13 family. In terms of assembly, part of the 30S ribosomal subunit. Forms a loose heterodimer with protein S19. Forms two bridges to the 50S subunit in the 70S ribosome.

In terms of biological role, located at the top of the head of the 30S subunit, it contacts several helices of the 16S rRNA. In the 70S ribosome it contacts the 23S rRNA (bridge B1a) and protein L5 of the 50S subunit (bridge B1b), connecting the 2 subunits; these bridges are implicated in subunit movement. Contacts the tRNAs in the A and P-sites. This Methylibium petroleiphilum (strain ATCC BAA-1232 / LMG 22953 / PM1) protein is Small ribosomal subunit protein uS13.